The chain runs to 1059 residues: RNA-binding protein 26 (1059 aa).

Basic and acidic residues-rich tracts occupy residues 98-114 (EKEIKKDEVNKEEEKEK) and 130-147 (RHKDTRENRKRSNSDRES). A disordered region spans residues 98–275 (EKEIKKDEVN…PVDNSYASGS (178 aa)). The segment covering 172–182 (LNSNKVQNAKN) has biased composition (polar residues). The span at 184-213 (RSRDDRKRDDRFRKREYDRNVPRRDSYRDR) shows a compositional bias: basic and acidic residues. Basic residues predominate over residues 214-231 (YNRRRGRSRSYSRSRSRS). Positions 232 to 266 (WSKERQRDRDRSRSRTRSRDKDSGKPKFDLDRPDP) are enriched in basic and acidic residues. The C3H1-type zinc finger occupies 327-355 (QMQKKRCRDYDEKGFCMRGDMCPFDHGSD). Positions 375–428 (PVLEGPPPPGLPPPPSLLTPPPVNLQPPPVPPPGPLPPSLPPVTGPPPPLPPLQ) are enriched in pro residues. Residues 375-443 (PVLEGPPPPG…APPNSATSSV (69 aa)) form a disordered region. Positions 434–443 (APPNSATSSV) are enriched in low complexity. The RRM 1 domain maps to 581–655 (TKLELRRIPP…RFIRMYWHRE (75 aa)). Residues 771 to 873 (GDAQKKKQEA…LLDTELDLYN (103 aa)) adopt a coiled-coil conformation. The 70-residue stretch at 942–1011 (RALKISGFTE…QDLKLAWNKP (70 aa)) folds into the RRM 2 domain. Positions 1010 to 1059 (KPVPNASSTEVEDADQEEEEFHEDSIVDDSLLQDDDEEEEDDNESRSWRR) are disordered. 2 stretches are compositionally biased toward acidic residues: residues 1019–1031 (EVEDADQEEEEFH) and 1040–1052 (LLQDDDEEEEDDN).

Its function is as follows. May be involved in the turnover of nuclear polyadenylated (pA+) RNA. This is RNA-binding protein 26 from Xenopus laevis (African clawed frog).